Here is a 1454-residue protein sequence, read N- to C-terminus: Alpha-2-macroglobulin-like protein 1 (1454 aa).

A signal peptide spans 1-17 (MWAQLLLGMLALSPAIA). Residues C40 and C78 are joined by a disulfide bond. N120 carries N-linked (GlcNAc...) asparagine glycosylation. 2 cysteine pairs are disulfide-bonded: C241/C291 and C259/C279. N-linked (GlcNAc...) asparagine glycans are attached at residues N281 and N409. Cystine bridges form between C464–C557, C589–C769, C819–C847, C845–C881, C919–C1307, C1075–C1123, and C1338–C1453. The bait region stretch occupies residues 695–726 (SHRSPEYSTAMGAGGGHPEAFESSTPLHQAED). N-linked (GlcNAc...) asparagine glycosylation occurs at N857. The segment at residues 970–973 (CGEQ) is a cross-link (isoglutamyl cysteine thioester (Cys-Gln)). N-linked (GlcNAc...) asparagine glycosylation occurs at N1020.

The protein belongs to the protease inhibitor I39 (alpha-2-macroglobulin) family. As to quaternary structure, monomer. In terms of tissue distribution, in the epidermis, expressed predominantly in the granular layer at the apical edge of keratinocytes (at protein level). Also detected in placenta, testis and thymus but not in epithelia of kidney, lung, small intestine or colon.

Its subcellular location is the secreted. In terms of biological role, is able to inhibit all four classes of proteinases by a unique 'trapping' mechanism. This protein has a peptide stretch, called the 'bait region' which contains specific cleavage sites for different proteinases. When a proteinase cleaves the bait region, a conformational change is induced in the protein which traps the proteinase. The entrapped enzyme remains active against low molecular weight substrates (activity against high molecular weight substrates is greatly reduced). Following cleavage in the bait region a thioester bond is hydrolyzed and mediates the covalent binding of the protein to the proteinase. Displays inhibitory activity against chymotrypsin, papain, thermolysin, subtilisin A and, to a lesser extent, elastase but not trypsin. May play an important role during desquamation by inhibiting extracellular proteases. The protein is Alpha-2-macroglobulin-like protein 1 of Homo sapiens (Human).